The primary structure comprises 220 residues: Protein CREG1 (220 aa).

The signal sequence occupies residues M1–G31. The tract at residues S30–E53 is disordered. Basic and acidic residues predominate over residues G33–E53. N-linked (GlcNAc...) asparagine glycosylation is found at N160 and N216.

Belongs to the CREG family. As to quaternary structure, homodimer. Interacts with IGF2R; the interaction is dependent on glycosylation. In terms of processing, N-glycosylated. In terms of tissue distribution, widely expressed.

It is found in the secreted. May contribute to the transcriptional control of cell growth and differentiation. Antagonizes transcriptional activation and cellular transformation by the adenovirus E1A protein. The transcriptional control activity of cell growth requires interaction with IGF2R. This chain is Protein CREG1 (Creg1), found in Mus musculus (Mouse).